A 178-amino-acid polypeptide reads, in one-letter code: Translation initiation factor IF-3 (178 aa).

Residues M1–D20 are disordered.

This sequence belongs to the IF-3 family. In terms of assembly, monomer.

The protein resides in the cytoplasm. Its function is as follows. IF-3 binds to the 30S ribosomal subunit and shifts the equilibrium between 70S ribosomes and their 50S and 30S subunits in favor of the free subunits, thus enhancing the availability of 30S subunits on which protein synthesis initiation begins. The chain is Translation initiation factor IF-3 from Brucella abortus biovar 1 (strain 9-941).